The following is a 156-amino-acid chain: Ribosomal RNA large subunit methyltransferase H (156 aa).

Residues Leu73, Gly104, and 123 to 128 each bind S-adenosyl-L-methionine; that span reads LSPLTL.

It belongs to the RNA methyltransferase RlmH family. Homodimer.

It is found in the cytoplasm. It carries out the reaction pseudouridine(1915) in 23S rRNA + S-adenosyl-L-methionine = N(3)-methylpseudouridine(1915) in 23S rRNA + S-adenosyl-L-homocysteine + H(+). In terms of biological role, specifically methylates the pseudouridine at position 1915 (m3Psi1915) in 23S rRNA. The chain is Ribosomal RNA large subunit methyltransferase H from Photobacterium profundum (strain SS9).